We begin with the raw amino-acid sequence, 434 residues long: Glutamyl-tRNA reductase (434 aa).

Substrate is bound by residues 54-57 (TCNR), Ser-113, 118-120 (EAQ), and Gln-124. Cys-55 functions as the Nucleophile in the catalytic mechanism. 193–198 (GGGEVS) contacts NADP(+).

Belongs to the glutamyl-tRNA reductase family. As to quaternary structure, homodimer.

It carries out the reaction (S)-4-amino-5-oxopentanoate + tRNA(Glu) + NADP(+) = L-glutamyl-tRNA(Glu) + NADPH + H(+). It functions in the pathway porphyrin-containing compound metabolism; protoporphyrin-IX biosynthesis; 5-aminolevulinate from L-glutamyl-tRNA(Glu): step 1/2. It participates in porphyrin-containing compound metabolism; chlorophyll biosynthesis. In terms of biological role, catalyzes the NADPH-dependent reduction of glutamyl-tRNA(Glu) to glutamate 1-semialdehyde (GSA). The protein is Glutamyl-tRNA reductase of Chloroflexus aurantiacus (strain ATCC 29366 / DSM 635 / J-10-fl).